The sequence spans 919 residues: Synphilin-1 (919 aa).

3 disordered regions span residues serine 80 to asparagine 99, glycine 108 to leucine 140, and serine 287 to serine 313. A compositionally biased stretch (polar residues) spans serine 299–glycine 308. 4 ANK repeats span residues asparagine 349–glutamate 380, glutamate 384–glutamate 413, aspartate 419–isoleucine 448, and aspartate 456–methionine 485. Residues cysteine 515 to serine 552 are a coiled coil. 3 disordered regions span residues alanine 549 to aspartate 615, arginine 666 to serine 713, and serine 728 to alanine 919. Positions lysine 555–lysine 571 are enriched in low complexity. Residues alanine 603–valine 632 form an ANK 5 repeat. Over residues leucine 667–serine 685 the composition is skewed to low complexity. Over residues glutamate 686–arginine 700 the composition is skewed to basic and acidic residues. The ANK 6 repeat unit spans residues proline 699 to glycine 729. The span at proline 774–serine 785 shows a compositional bias: low complexity. The span at asparagine 833–arginine 842 shows a compositional bias: basic and acidic residues. Residues leucine 844 to glycine 854 show a composition bias toward polar residues. Low complexity predominate over residues asparagine 874 to glutamine 886.

In terms of assembly, homodimer. Heterodimer of isoform 1 and isoform 2. Interacts with SIAH1, SIAH2, SNCA, RNF19A and PRKN. Isoform 2 has a strong tendency to form aggregates and can sequester isoform 1. Ubiquitinated; mediated by SIAH1, SIAH2 or RNF19A and leading to its subsequent proteasomal degradation. In the absence of proteasomal degradation, ubiquitinated SNCAIP accumulates in cytoplasmic inclusion bodies. Isoform 2 is subject to limited ubiquitination that does not lead to proteasomal degradation. As to expression, detected in brain (at protein level). Widely expressed, with highest levels in brain, heart and placenta.

Its subcellular location is the cytoplasm. Isoform 2 inhibits the ubiquitin ligase activity of SIAH1 and inhibits proteasomal degradation of target proteins. Isoform 2 inhibits autoubiquitination and proteasomal degradation of SIAH1, and thereby increases cellular levels of SIAH. Isoform 2 modulates SNCA monoubiquitination by SIAH1. This chain is Synphilin-1 (SNCAIP), found in Homo sapiens (Human).